Reading from the N-terminus, the 764-residue chain is Hemocyte protein-glutamine gamma-glutamyltransferase (764 aa).

Catalysis depends on residues C343, H402, and D425. 4 residues coordinate Ca(2+): N465, D467, E522, and E527.

It belongs to the transglutaminase superfamily. Transglutaminase family. Requires Ca(2+) as cofactor. In terms of tissue distribution, mainly expressed in hemocytes, hepatopancreas, and gastric tissues. On the other hand nothing was detected in the heart, intestine and muscle.

The protein resides in the membrane. It catalyses the reaction L-glutaminyl-[protein] + L-lysyl-[protein] = [protein]-L-lysyl-N(6)-5-L-glutamyl-[protein] + NH4(+). Functionally, catalyzes the cross-linking of proteins and the conjugation of polyamines to proteins. The protein is Hemocyte protein-glutamine gamma-glutamyltransferase of Tachypleus tridentatus (Japanese horseshoe crab).